Reading from the N-terminus, the 410-residue chain is LL-diaminopimelate aminotransferase (410 aa).

Residues tyrosine 15 and glycine 42 each contribute to the substrate site. Residues tyrosine 72, 108-109 (AK), tyrosine 132, asparagine 187, tyrosine 218, and 246-248 (SFS) contribute to the pyridoxal 5'-phosphate site. Substrate-binding residues include lysine 109, tyrosine 132, and asparagine 187. Lysine 249 is modified (N6-(pyridoxal phosphate)lysine). Arginine 257 and asparagine 292 together coordinate pyridoxal 5'-phosphate. Substrate-binding residues include asparagine 292 and arginine 388.

The protein belongs to the class-I pyridoxal-phosphate-dependent aminotransferase family. LL-diaminopimelate aminotransferase subfamily. Homodimer. Requires pyridoxal 5'-phosphate as cofactor.

The catalysed reaction is (2S,6S)-2,6-diaminopimelate + 2-oxoglutarate = (S)-2,3,4,5-tetrahydrodipicolinate + L-glutamate + H2O + H(+). The protein operates within amino-acid biosynthesis; L-lysine biosynthesis via DAP pathway; LL-2,6-diaminopimelate from (S)-tetrahydrodipicolinate (aminotransferase route): step 1/1. Its function is as follows. Involved in the synthesis of meso-diaminopimelate (m-DAP or DL-DAP), required for both lysine and peptidoglycan biosynthesis. Catalyzes the direct conversion of tetrahydrodipicolinate to LL-diaminopimelate. Can also use m-DAP instead of LL-DAP as the amino-group donor. This is LL-diaminopimelate aminotransferase from Acetivibrio thermocellus (strain ATCC 27405 / DSM 1237 / JCM 9322 / NBRC 103400 / NCIMB 10682 / NRRL B-4536 / VPI 7372) (Clostridium thermocellum).